A 259-amino-acid chain; its full sequence is Kallikrein 1-related peptidase b22 (259 aa).

An N-terminal signal peptide occupies residues 1 to 17 (MRFLILFLTLSLGGIDA). Positions 18–24 (APPVQSR) are cleaved as a propeptide — activation peptide. One can recognise a Peptidase S1 domain in the interval 25 to 256 (ILGGFKCEKN…FTSWIKDTMA (232 aa)). 5 disulfides stabilise this stretch: C31–C171, C50–C66, C150–C217, C182–C196, and C207–C232. H65 serves as the catalytic Charge relay system. N-linked (GlcNAc...) asparagine glycosylation occurs at N102. The Charge relay system role is filled by D118. S211 acts as the Charge relay system in catalysis.

It belongs to the peptidase S1 family. Kallikrein subfamily.

The enzyme catalyses Preferential cleavage of Arg-|-Xaa bonds in small molecule substrates. Highly selective action to release kallidin (lysyl-bradykinin) from kininogen involves hydrolysis of Met-|-Xaa or Leu-|-Xaa.. Its function is as follows. Glandular kallikreins cleave Met-Lys and Arg-Ser bonds in kininogen to release Lys-bradykinin. The sequence is that of Kallikrein 1-related peptidase b22 (Klk1b22) from Mus musculus (Mouse).